We begin with the raw amino-acid sequence, 393 residues long: ATP phosphoribosyltransferase regulatory subunit (393 aa).

Belongs to the class-II aminoacyl-tRNA synthetase family. HisZ subfamily. As to quaternary structure, heteromultimer composed of HisG and HisZ subunits.

The protein localises to the cytoplasm. The protein operates within amino-acid biosynthesis; L-histidine biosynthesis; L-histidine from 5-phospho-alpha-D-ribose 1-diphosphate: step 1/9. Functionally, required for the first step of histidine biosynthesis. May allow the feedback regulation of ATP phosphoribosyltransferase activity by histidine. The protein is ATP phosphoribosyltransferase regulatory subunit of Nitrosospira multiformis (strain ATCC 25196 / NCIMB 11849 / C 71).